We begin with the raw amino-acid sequence, 125 residues long: UPF0225 protein Cgl1438/cg1626 (125 aa).

Belongs to the UPF0225 family.

In Corynebacterium glutamicum (strain ATCC 13032 / DSM 20300 / JCM 1318 / BCRC 11384 / CCUG 27702 / LMG 3730 / NBRC 12168 / NCIMB 10025 / NRRL B-2784 / 534), this protein is UPF0225 protein Cgl1438/cg1626.